Here is a 152-residue protein sequence, read N- to C-terminus: Transcriptional regulator MraZ (152 aa).

2 SpoVT-AbrB domains span residues 5-52 and 81-124; these read ASAI…PIHE and AHEV…DEQA.

The protein belongs to the MraZ family. In terms of assembly, forms oligomers.

Its subcellular location is the cytoplasm. The protein localises to the nucleoid. In Shewanella sp. (strain ANA-3), this protein is Transcriptional regulator MraZ.